We begin with the raw amino-acid sequence, 255 residues long: tRNA (guanine-N(7)-)-methyltransferase (255 aa).

Glu-86, Glu-111, Asp-138, and Asp-161 together coordinate S-adenosyl-L-methionine. Residue Asp-161 is part of the active site. Substrate-binding positions include Lys-165, Asp-197, and 234-237; that span reads TKFE.

It belongs to the class I-like SAM-binding methyltransferase superfamily. TrmB family.

The enzyme catalyses guanosine(46) in tRNA + S-adenosyl-L-methionine = N(7)-methylguanosine(46) in tRNA + S-adenosyl-L-homocysteine. Its pathway is tRNA modification; N(7)-methylguanine-tRNA biosynthesis. In terms of biological role, catalyzes the formation of N(7)-methylguanine at position 46 (m7G46) in tRNA. This is tRNA (guanine-N(7)-)-methyltransferase from Pasteurella multocida (strain Pm70).